A 327-amino-acid chain; its full sequence is Phenylalanine--tRNA ligase alpha subunit (327 aa).

Position 252 (Glu-252) interacts with Mg(2+).

It belongs to the class-II aminoacyl-tRNA synthetase family. Phe-tRNA synthetase alpha subunit type 1 subfamily. In terms of assembly, tetramer of two alpha and two beta subunits. Requires Mg(2+) as cofactor.

It is found in the cytoplasm. It catalyses the reaction tRNA(Phe) + L-phenylalanine + ATP = L-phenylalanyl-tRNA(Phe) + AMP + diphosphate + H(+). In Yersinia enterocolitica serotype O:8 / biotype 1B (strain NCTC 13174 / 8081), this protein is Phenylalanine--tRNA ligase alpha subunit.